The following is a 442-amino-acid chain: D-inositol 3-phosphate glycosyltransferase (442 aa).

Histidine 15 serves as a coordination point for 1D-myo-inositol 3-phosphate. Residues glutamine 21 to proline 22 and glycine 29 each bind UDP-N-acetyl-alpha-D-glucosamine. Residues aspartate 26–asparagine 31, lysine 84, tyrosine 117, threonine 141, and arginine 161 contribute to the 1D-myo-inositol 3-phosphate site. 3 residues coordinate UDP-N-acetyl-alpha-D-glucosamine: arginine 235, lysine 240, and glutamine 299. 3 residues coordinate Mg(2+): tyrosine 308, arginine 309, and serine 311. 2 residues coordinate UDP-N-acetyl-alpha-D-glucosamine: glutamate 321 and glutamate 329. Threonine 335 is a Mg(2+) binding site.

The protein belongs to the glycosyltransferase group 1 family. MshA subfamily. In terms of assembly, homodimer.

It carries out the reaction 1D-myo-inositol 3-phosphate + UDP-N-acetyl-alpha-D-glucosamine = 1D-myo-inositol 2-acetamido-2-deoxy-alpha-D-glucopyranoside 3-phosphate + UDP + H(+). Catalyzes the transfer of a N-acetyl-glucosamine moiety to 1D-myo-inositol 3-phosphate to produce 1D-myo-inositol 2-acetamido-2-deoxy-glucopyranoside 3-phosphate in the mycothiol biosynthesis pathway. This chain is D-inositol 3-phosphate glycosyltransferase, found in Rhodococcus erythropolis (strain PR4 / NBRC 100887).